A 320-amino-acid polypeptide reads, in one-letter code: Taste receptor type 2 member 129 (320 aa).

The Extracellular segment spans residues 1-8 (MDGIVQNM). The helical transmembrane segment at 9 to 29 (FTFIVIVEIIIGWIGNGFIAL) threads the bilayer. Residues 30–55 (VNCIHWYKRRKISALNQILTALAFSR) are Cytoplasmic-facing. The helical transmembrane segment at 56-76 (IYLLLTVFTVIAVSTLYTHVL) threads the bilayer. The Extracellular segment spans residues 77-88 (VTRRVVKLINFH). A helical membrane pass occupies residues 89 to 109 (LLFSNHFSMWLAACLGLYYFL). Residues 110–128 (KIAHFPNSIFVYLKMRINQ) are Cytoplasmic-facing. A helical membrane pass occupies residues 129–149 (VVSGTLLMSLGLLFLNTLLIN). At 150–185 (SYIDTKIDDYREHLLYDFTSNNTASFYRVILVINNC) the chain is on the extracellular side. The N-linked (GlcNAc...) asparagine glycan is linked to N170. The helical transmembrane segment at 186 to 206 (IFTSIPFTLSQSTFLLLIFSL) threads the bilayer. Residues 207-233 (WRHYKKMQQHAQRCRDVLADAHIRVLQ) lie on the Cytoplasmic side of the membrane. Residues 234–254 (TMVTYVLLCAIFFLSLSMQIL) traverse the membrane as a helical segment. At 255-264 (RSELLKNILY) the chain is on the extracellular side. Residues 265-285 (VRFCEIVAAVFPSGHSCVLIC) traverse the membrane as a helical segment. Residues 286–320 (RDTNLRGTFLSVLSWLKQRFTSWIPNINCRSSCIF) are Cytoplasmic-facing.

It belongs to the G-protein coupled receptor T2R family.

The protein resides in the membrane. In terms of biological role, putative taste receptor which may play a role in the perception of bitterness. This chain is Taste receptor type 2 member 129, found in Mus musculus (Mouse).